Reading from the N-terminus, the 154-residue chain is Lipoprotein signal peptidase (154 aa).

The next 3 membrane-spanning stretches (helical) occupy residues 8 to 28 (LYLI…NYIV), 58 to 78 (IFSG…AVVI), and 88 to 108 (NGLF…NFID). Catalysis depends on residues D117 and D133. The helical transmembrane segment at 131 to 151 (IADSAITVGIILVFIYLIFIS) threads the bilayer.

The protein belongs to the peptidase A8 family.

The protein localises to the cell membrane. The enzyme catalyses Release of signal peptides from bacterial membrane prolipoproteins. Hydrolyzes -Xaa-Yaa-Zaa-|-(S,diacylglyceryl)Cys-, in which Xaa is hydrophobic (preferably Leu), and Yaa (Ala or Ser) and Zaa (Gly or Ala) have small, neutral side chains.. Its pathway is protein modification; lipoprotein biosynthesis (signal peptide cleavage). Functionally, this protein specifically catalyzes the removal of signal peptides from prolipoproteins. This chain is Lipoprotein signal peptidase, found in Lactobacillus johnsonii (strain CNCM I-12250 / La1 / NCC 533).